A 608-amino-acid polypeptide reads, in one-letter code: Chaperone protein HtpG (608 aa).

The a; substrate-binding stretch occupies residues 1–332 (MQFQTEVNQL…VEDLPLNVSR (332 aa)). The tract at residues 333 to 536 (EILQENQILK…KNKPDFAMQQ (204 aa)) is b. The c stretch occupies residues 537-608 (LLKQMGQEQN…LTKIINKAFS (72 aa)).

The protein belongs to the heat shock protein 90 family. Homodimer.

It is found in the cytoplasm. Its function is as follows. Molecular chaperone. Has ATPase activity. The polypeptide is Chaperone protein HtpG (Campylobacter jejuni (strain RM1221)).